The chain runs to 351 residues: Phosphoribosylformylglycinamidine cyclo-ligase (351 aa).

It belongs to the AIR synthase family.

The protein resides in the cytoplasm. It carries out the reaction 2-formamido-N(1)-(5-O-phospho-beta-D-ribosyl)acetamidine + ATP = 5-amino-1-(5-phospho-beta-D-ribosyl)imidazole + ADP + phosphate + H(+). The protein operates within purine metabolism; IMP biosynthesis via de novo pathway; 5-amino-1-(5-phospho-D-ribosyl)imidazole from N(2)-formyl-N(1)-(5-phospho-D-ribosyl)glycinamide: step 2/2. In Synechococcus sp. (strain JA-3-3Ab) (Cyanobacteria bacterium Yellowstone A-Prime), this protein is Phosphoribosylformylglycinamidine cyclo-ligase.